A 1407-amino-acid polypeptide reads, in one-letter code: DNA-directed RNA polymerase subunit beta' (1407 aa).

The Zn(2+) site is built by Cys70, Cys72, Cys85, and Cys88. Mg(2+)-binding residues include Asp460, Asp462, and Asp464. Zn(2+)-binding residues include Cys814, Cys888, Cys895, and Cys898.

This sequence belongs to the RNA polymerase beta' chain family. As to quaternary structure, the RNAP catalytic core consists of 2 alpha, 1 beta, 1 beta' and 1 omega subunit. When a sigma factor is associated with the core the holoenzyme is formed, which can initiate transcription. It depends on Mg(2+) as a cofactor. The cofactor is Zn(2+).

The enzyme catalyses RNA(n) + a ribonucleoside 5'-triphosphate = RNA(n+1) + diphosphate. DNA-dependent RNA polymerase catalyzes the transcription of DNA into RNA using the four ribonucleoside triphosphates as substrates. This chain is DNA-directed RNA polymerase subunit beta', found in Salmonella paratyphi B (strain ATCC BAA-1250 / SPB7).